The following is a 497-amino-acid chain: PHD finger protein 10 (497 aa).

The disordered stretch occupies residues Met1–Gln61. 3 positions are modified to phosphoserine: Ser11, Ser35, and Ser49. Positions Met88–Gln184 are essential to induce neural progenitor proliferation. The interval Met88–Leu294 is SAY. Residue Lys240 forms a Glycyl lysine isopeptide (Lys-Gly) (interchain with G-Cter in SUMO2) linkage. Ser269 is modified (phosphoserine). Low complexity predominate over residues Glu284–Asp295. The disordered stretch occupies residues Glu284 to Pro367. Positions Leu291–Asp333 are essential to induce neural progenitor proliferation. Phosphoserine occurs at positions 296, 300, 326, and 330. The segment covering Ser296–Gly307 has biased composition (acidic residues). Residues Thr317–Glu327 are compositionally biased toward polar residues. Residues Lys344–Lys358 are compositionally biased toward basic and acidic residues. The PHD-type 1; degenerate zinc finger occupies Leu378 to Cys435. Lys384 is covalently cross-linked (Glycyl lysine isopeptide (Lys-Gly) (interchain with G-Cter in SUMO2)). The PHD-type 2; degenerate zinc finger occupies Ile437 to Ala480.

It belongs to the SAYP family. Component of neural progenitors-specific chromatin remodeling complex (npBAF complex) composed of at least, ARID1A/BAF250A or ARID1B/BAF250B, SMARCD1/BAF60A, SMARCD3/BAF60C, SMARCA2/BRM/BAF190B, SMARCA4/BRG1/BAF190A, SMARCB1/BAF47, SMARCC1/BAF155, SMARCE1/BAF57, SMARCC2/BAF170, PHF10/BAF45A, ACTL6A/BAF53A and actin. Interacts with ACTL6A/BAF53A, SMARCA2/BRM/BAF190B, SMARCA4/BRG1/BAF190A and PBRM1/BAF180.

The protein resides in the nucleus. Its function is as follows. Involved in transcription activity regulation by chromatin remodeling. Belongs to the neural progenitors-specific chromatin remodeling complex (npBAF complex) and is required for the proliferation of neural progenitors. During neural development a switch from a stem/progenitor to a post-mitotic chromatin remodeling mechanism occurs as neurons exit the cell cycle and become committed to their adult state. The transition from proliferating neural stem/progenitor cells to post-mitotic neurons requires a switch in subunit composition of the npBAF and nBAF complexes. As neural progenitors exit mitosis and differentiate into neurons, npBAF complexes which contain ACTL6A/BAF53A and PHF10/BAF45A, are exchanged for homologous alternative ACTL6B/BAF53B and DPF1/BAF45B or DPF3/BAF45C subunits in neuron-specific complexes (nBAF). The npBAF complex is essential for the self-renewal/proliferative capacity of the multipotent neural stem cells. The nBAF complex along with CREST plays a role regulating the activity of genes essential for dendrite growth. The polypeptide is PHD finger protein 10 (Phf10) (Rattus norvegicus (Rat)).